A 96-amino-acid polypeptide reads, in one-letter code: Alpha-elapitoxin-Al2b (96 aa).

Residues 1 to 21 form the signal peptide; the sequence is MKTLLLTLVVVTIVCLDFGGG. 5 cysteine pairs are disulfide-bonded: Cys-24/Cys-41, Cys-34/Cys-62, Cys-47/Cys-51, Cys-66/Cys-77, and Cys-78/Cys-83.

Belongs to the three-finger toxin family. Long-chain subfamily. Type II alpha-neurotoxin sub-subfamily. In terms of tissue distribution, expressed by the venom gland.

It is found in the secreted. Functionally, potent long-chain postsynaptic neurotoxin. Pseudo-irreversibly inhibits the nicotinic acetylcholine receptor through competitive antagonism. In Austrelaps labialis (Pygmy copperhead), this protein is Alpha-elapitoxin-Al2b.